The primary structure comprises 474 residues: Adenylyl cyclase-associated protein 1 (474 aa).

Ala-2 bears the N-acetylalanine mark. Tyr-31 is modified (phosphotyrosine). Position 34 is a phosphoserine (Ser-34). At Lys-80 the chain carries N6-acetyllysine. Disordered stretches follow at residues 215-253 (ELSG…SASR) and 277-316 (MKTH…ATKK). Residues 217 to 227 (SGLPSGPSVGS) show a composition bias toward low complexity. Residues 228–241 (GPPPPPPGPPPPPI) are compositionally biased toward pro residues. Lys-286 is modified (N6-methyllysine). Ser-289, Ser-294, and Ser-300 each carry phosphoserine. The segment covering 299–311 (FSAPKPQTSPSPK) has biased composition (pro residues). Position 306 is a phosphothreonine (Thr-306). Ser-307 and Ser-309 each carry phosphoserine. Positions 312–452 (PATKKEPALL…EGGDFNEFPV (141 aa)) constitute a C-CAP/cofactor C-like domain. Lys-347 is covalently cross-linked (Glycyl lysine isopeptide (Lys-Gly) (interchain with G-Cter in SUMO1)).

It belongs to the CAP family. Homodimer. Binds actin monomers. Ubiquitous.

It localises to the cell membrane. Functionally, directly regulates filament dynamics and has been implicated in a number of complex developmental and morphological processes, including mRNA localization and the establishment of cell polarity. This chain is Adenylyl cyclase-associated protein 1 (Cap1), found in Mus musculus (Mouse).